We begin with the raw amino-acid sequence, 60 residues long: U-actitoxin-Avd12b (60 aa).

Positions 1 to 6 (SKEGMS) are cleaved as a signal peptide. A propeptide spanning residues 7-12 (YEEPEN) is cleaved from the precursor. Positions 14–56 (EGVACTGQYAESFCLNGGTCRYIQSIGEYYCICVGDYTGHRCE) constitute an EGF-like domain. 3 disulfide bridges follow: C18-C33, C27-C44, and C46-C55.

It belongs to the EGF domain peptide family.

The protein localises to the secreted. Its subcellular location is the nematocyst. In terms of biological role, has both toxic and EGF activity. Its EGF activity consists of rounding cells (morphological change) and inducing tyrosine phosphorylation of the EGFR in A431 cells, but with a lower potency that human EGF. The sequence is that of U-actitoxin-Avd12b from Anemonia viridis (Snakelocks anemone).